The sequence spans 307 residues: Ornithine carbamoyltransferase (307 aa).

Residues 54-57, Gln-81, Arg-105, and 132-135 each bind carbamoyl phosphate; these read STRT and HPCQ. L-ornithine-binding positions include Asn-163, Asp-221, and 225–226; that span reads SM. Residues 261–262 and Arg-289 each bind carbamoyl phosphate; that span reads CL.

The protein belongs to the aspartate/ornithine carbamoyltransferase superfamily. OTCase family.

Its subcellular location is the cytoplasm. The enzyme catalyses carbamoyl phosphate + L-ornithine = L-citrulline + phosphate + H(+). It participates in amino-acid biosynthesis; L-arginine biosynthesis; L-arginine from L-ornithine and carbamoyl phosphate: step 1/3. Reversibly catalyzes the transfer of the carbamoyl group from carbamoyl phosphate (CP) to the N(epsilon) atom of ornithine (ORN) to produce L-citrulline. This chain is Ornithine carbamoyltransferase, found in Chromobacterium violaceum (strain ATCC 12472 / DSM 30191 / JCM 1249 / CCUG 213 / NBRC 12614 / NCIMB 9131 / NCTC 9757 / MK).